The chain runs to 328 residues: Alanine racemase (328 aa).

Lysine 33 functions as the Proton acceptor; specific for D-alanine in the catalytic mechanism. Lysine 33 is subject to N6-(pyridoxal phosphate)lysine. Arginine 118 contacts substrate. The active-site Proton acceptor; specific for L-alanine is tyrosine 237. Methionine 283 provides a ligand contact to substrate.

It belongs to the alanine racemase family. It depends on pyridoxal 5'-phosphate as a cofactor.

The enzyme catalyses L-alanine = D-alanine. Its pathway is amino-acid biosynthesis; D-alanine biosynthesis; D-alanine from L-alanine: step 1/1. Functionally, catalyzes the interconversion of L-alanine and D-alanine. May also act on other amino acids. The protein is Alanine racemase (alr) of Campylobacter jejuni (strain RM1221).